Reading from the N-terminus, the 126-residue chain is Large ribosomal subunit protein bL12 (126 aa).

Belongs to the bacterial ribosomal protein bL12 family. Homodimer. Part of the ribosomal stalk of the 50S ribosomal subunit. Forms a multimeric L10(L12)X complex, where L10 forms an elongated spine to which 2 to 4 L12 dimers bind in a sequential fashion. Binds GTP-bound translation factors.

Its function is as follows. Forms part of the ribosomal stalk which helps the ribosome interact with GTP-bound translation factors. Is thus essential for accurate translation. The sequence is that of Large ribosomal subunit protein bL12 from Beijerinckia indica subsp. indica (strain ATCC 9039 / DSM 1715 / NCIMB 8712).